The following is a 331-amino-acid chain: dTDP-glucose 4,6-dehydratase (331 aa).

Residues 11–12 (FI), 33–36 (DALT), 57–58 (DI), 77–81 (FAAES), and Thr-96 contribute to the NAD(+) site. Position 81 (Ser-81) interacts with substrate. Thr-120 is a substrate binding site. Residue Asp-121 is the Proton donor of the active site. Catalysis depends on proton acceptor residues Glu-122 and Tyr-147. 147 to 151 (YSATK) is an NAD(+) binding site. Asn-176 is a binding site for substrate. Position 177 (Asn-177) interacts with NAD(+). Substrate contacts are provided by residues 186–191 (KFIPRQ), 202–204 (KLY), Arg-211, Asn-246, and 269–273 (DRVGH).

Belongs to the NAD(P)-dependent epimerase/dehydratase family. dTDP-glucose dehydratase subfamily. As to quaternary structure, homodimer. Requires NAD(+) as cofactor.

The enzyme catalyses dTDP-alpha-D-glucose = dTDP-4-dehydro-6-deoxy-alpha-D-glucose + H2O. Its pathway is carbohydrate biosynthesis; dTDP-L-rhamnose biosynthesis. Its function is as follows. Catalyzes the dehydration of dTDP-D-glucose to form dTDP-6-deoxy-D-xylo-4-hexulose via a three-step process involving oxidation, dehydration and reduction. Involved in the biosynthesis of the dTDP-L-rhamnose which is a component of the critical linker, D-N-acetylglucosamine-L-rhamnose disaccharide, which connects the galactan region of arabinogalactan to peptidoglycan via a phosphodiester linkage. The polypeptide is dTDP-glucose 4,6-dehydratase (rmlB) (Mycobacterium tuberculosis (strain CDC 1551 / Oshkosh)).